The chain runs to 459 residues: Vitronectin (459 aa).

The first 19 residues, 1–19, serve as a signal peptide directing secretion; it reads MAPLRPLLMLALLAWVALA. An SMB domain is found at 20 to 63; that stretch reads DQESCKGRCTDGFIAERKCQCDELCSYYQSCCTDYVAECKPQVT. Cystine bridges form between C24/C28, C24/C40, C28/C58, C38/C40, C38/C51, C44/C50, and C51/C58. A Cell attachment site motif is present at residues 64-66; the sequence is RGD. Sulfotyrosine is present on residues Y75, Y78, and Y80. 2 N-linked (GlcNAc...) asparagine glycosylation sites follow: N87 and N146. Hemopexin repeat units follow at residues 135–179, 180–227, and 228–285; these read GKPF…VWGI, KGPI…FKGI, and PDDV…FALM. S289 and S378 each carry phosphoserine. The interval 338-380 is disordered; sequence LKPSQPKMTKSARRSGKRYRSRRGRGRGRGHSRSQKSHRQSRS. Residues 347–378 show a composition bias toward basic residues; sequence KSARRSGKRYRSRRGRGRGRGHSRSQKSHRQS. Residues Y398 and Y401 each carry the sulfotyrosine modification. Residues 400 to 453 form a Hemopexin 4 repeat; the sequence is DYKMDWLVPATCEPIQSVYFFSGEEYYRVNLRTQRVDTVTPPYPRSIAQYWLGC.

As to quaternary structure, monomer. Interacts with SERPINE1/PAI1 and C1QBP. Post-translationally, sulfated on tyrosine residues. N- and O-glycosylated. In terms of processing, it has been suggested that the active SMB domain may be permitted considerable disulfide bond heterogeneity or variability, thus two alternate disulfide patterns based on 3D structures are described with 1 disulfide bond conserved in both. As to expression, plasma.

The protein resides in the secreted. It localises to the extracellular space. Vitronectin is a cell adhesion and spreading factor found in serum and tissues. Vitronectin interact with glycosaminoglycans and proteoglycans. Is recognized by certain members of the integrin family and serves as a cell-to-substrate adhesion molecule. Inhibitor of the membrane-damaging effect of the terminal cytolytic complement pathway. This is Vitronectin (VTN) from Sus scrofa (Pig).